Consider the following 426-residue polypeptide: Enolase (426 aa).

Residue Gln163 participates in (2R)-2-phosphoglycerate binding. Glu205 serves as the catalytic Proton donor. Asp242, Glu286, and Asp313 together coordinate Mg(2+). 4 residues coordinate (2R)-2-phosphoglycerate: Lys338, Arg367, Ser368, and Lys389. The active-site Proton acceptor is the Lys338.

The protein belongs to the enolase family. Requires Mg(2+) as cofactor.

It localises to the cytoplasm. The protein resides in the secreted. It is found in the cell surface. It catalyses the reaction (2R)-2-phosphoglycerate = phosphoenolpyruvate + H2O. It participates in carbohydrate degradation; glycolysis; pyruvate from D-glyceraldehyde 3-phosphate: step 4/5. Functionally, catalyzes the reversible conversion of 2-phosphoglycerate (2-PG) into phosphoenolpyruvate (PEP). It is essential for the degradation of carbohydrates via glycolysis. The polypeptide is Enolase (Helicobacter pylori (strain J99 / ATCC 700824) (Campylobacter pylori J99)).